Here is a 560-residue protein sequence, read N- to C-terminus: Dimethylaniline monooxygenase [N-oxide-forming] 4 (560 aa).

Residues Gly9–Ser13, Glu32, and Leu40–Trp41 each bind FAD. NADP(+)-binding positions include Thr60–Asn61 and Thr195–Asp198. Residues Leu510–Tyr530 form a helical membrane-spanning segment.

This sequence belongs to the FMO family. Requires FAD as cofactor.

It is found in the microsome membrane. The protein resides in the endoplasmic reticulum membrane. It carries out the reaction N,N-dimethylaniline + NADPH + O2 + H(+) = N,N-dimethylaniline N-oxide + NADP(+) + H2O. Functionally, this protein is involved in the oxidative metabolism of a variety of xenobiotics such as drugs and pesticides. The protein is Dimethylaniline monooxygenase [N-oxide-forming] 4 (Fmo4) of Mus musculus (Mouse).